A 485-amino-acid chain; its full sequence is Glutamyl-tRNA(Gln) amidotransferase subunit A (485 aa).

Active-site charge relay system residues include Lys-79 and Ser-154. The Acyl-ester intermediate role is filled by Ser-178.

Belongs to the amidase family. GatA subfamily. In terms of assembly, heterotrimer of A, B and C subunits.

The catalysed reaction is L-glutamyl-tRNA(Gln) + L-glutamine + ATP + H2O = L-glutaminyl-tRNA(Gln) + L-glutamate + ADP + phosphate + H(+). Allows the formation of correctly charged Gln-tRNA(Gln) through the transamidation of misacylated Glu-tRNA(Gln) in organisms which lack glutaminyl-tRNA synthetase. The reaction takes place in the presence of glutamine and ATP through an activated gamma-phospho-Glu-tRNA(Gln). This is Glutamyl-tRNA(Gln) amidotransferase subunit A from Persephonella marina (strain DSM 14350 / EX-H1).